The primary structure comprises 418 residues: Nucleoside permease NupC (418 aa).

Transmembrane regions (helical) follow at residues 2–22 (IFSS…AWVF), 34–54 (IVSA…VPLG), 93–113 (IGGF…ASLI), 174–194 (IFAV…AGYA), 198–218 (IPLP…LLFA), 264–284 (LLAF…VGGF), 292–314 (LGLI…WSQA), 354–374 (AIIT…MLIG), and 395–415 (VLVG…FIGL).

This sequence belongs to the concentrative nucleoside transporter (CNT) (TC 2.A.41) family.

It localises to the cell inner membrane. Functionally, involved in purine nucleosides uptake. Could also be involved in uptake of nucleobases. The chain is Nucleoside permease NupC from Helicobacter pylori (strain ATCC 700392 / 26695) (Campylobacter pylori).